The chain runs to 360 residues: Ribosomal RNA large subunit methyltransferase M (360 aa).

S-adenosyl-L-methionine-binding positions include Ser187, 220-223 (CPGG), Asp239, Asp259, and Asp276. The active-site Proton acceptor is Lys305.

Belongs to the class I-like SAM-binding methyltransferase superfamily. RNA methyltransferase RlmE family. RlmM subfamily. In terms of assembly, monomer.

It localises to the cytoplasm. The catalysed reaction is cytidine(2498) in 23S rRNA + S-adenosyl-L-methionine = 2'-O-methylcytidine(2498) in 23S rRNA + S-adenosyl-L-homocysteine + H(+). Catalyzes the 2'-O-methylation at nucleotide C2498 in 23S rRNA. The chain is Ribosomal RNA large subunit methyltransferase M from Shewanella pealeana (strain ATCC 700345 / ANG-SQ1).